Consider the following 79-residue polypeptide: ATP synthase subunit beta (79 aa).

Belongs to the ATPase alpha/beta chains family. As to quaternary structure, F-type ATPases have 2 components, CF(1) - the catalytic core - and CF(0) - the membrane proton channel. CF(1) has five subunits: alpha(3), beta(3), gamma(1), delta(1), epsilon(1). CF(0) has three main subunits: a(1), b(2) and c(9-12). The alpha and beta chains form an alternating ring which encloses part of the gamma chain. CF(1) is attached to CF(0) by a central stalk formed by the gamma and epsilon chains, while a peripheral stalk is formed by the delta and b chains.

It localises to the cell membrane. The enzyme catalyses ATP + H2O + 4 H(+)(in) = ADP + phosphate + 5 H(+)(out). In terms of biological role, produces ATP from ADP in the presence of a proton gradient across the membrane. The catalytic sites are hosted primarily by the beta subunits. The sequence is that of ATP synthase subunit beta (atpD) from Streptococcus downei (Streptococcus sobrinus).